The following is a 454-amino-acid chain: Glutamate mutase epsilon subunit (454 aa).

Arg67 provides a ligand contact to L-glutamate. Gly69 serves as a coordination point for adenosylcob(III)alamin. Arg99 lines the L-glutamate pocket. Adenosylcob(III)alamin is bound at residue Asn122. L-glutamate is bound by residues Arg148–His149, Glu170, and Tyr176. Pro179 is a binding site for adenosylcob(III)alamin. Tyr180 is an L-glutamate binding site. Adenosylcob(III)alamin contacts are provided by Phe296, Lys325, Glu329, and Ile333.

The protein belongs to the methylaspartate mutase GlmE subunit family. In terms of assembly, heterotetramer composed of 2 epsilon subunits (GlmE) and 2 sigma subunits (GlmS). GlmE exists as a homodimer and GlmS as a monomer. Requires adenosylcob(III)alamin as cofactor.

The catalysed reaction is (2S,3S)-3-methyl-L-aspartate = L-glutamate. The protein operates within amino-acid degradation; L-glutamate degradation via mesaconate pathway; acetate and pyruvate from L-glutamate: step 1/4. Its function is as follows. Catalyzes the carbon skeleton rearrangement of L-glutamate to L-threo-3-methylaspartate ((2S,3S)-3-methylaspartate). This is Glutamate mutase epsilon subunit from Shigella dysenteriae serotype 1 (strain Sd197).